The sequence spans 92 residues: UPF0250 protein Smlt4048 (92 aa).

Belongs to the UPF0250 family.

The chain is UPF0250 protein Smlt4048 from Stenotrophomonas maltophilia (strain K279a).